We begin with the raw amino-acid sequence, 144 residues long: Large ribosomal subunit protein uL15 (144 aa).

The interval 1–58 (MKLNNLSPAPGSKHAEKRVGRGIGSGLGKTGGRGHKGQKSRSGGSVKPGFEGGQMPLQ) is disordered. Residues 21–31 (RGIGSGLGKTG) are compositionally biased toward gly residues.

This sequence belongs to the universal ribosomal protein uL15 family. As to quaternary structure, part of the 50S ribosomal subunit.

Its function is as follows. Binds to the 23S rRNA. This Chromohalobacter salexigens (strain ATCC BAA-138 / DSM 3043 / CIP 106854 / NCIMB 13768 / 1H11) protein is Large ribosomal subunit protein uL15.